We begin with the raw amino-acid sequence, 75 residues long: Transcription attenuation protein MtrB (75 aa).

It belongs to the MtrB family. Oligomer of 11 identical subunits arranged in doughnut-like structure.

Functionally, required for transcription attenuation control in the trp operon. This trans-acting factor binds to trinucleotide repeats (GAG or UAG) located in the trp leader transcript causing transcription termination. Binds the leader RNA only in presence of L-tryptophan. The polypeptide is Transcription attenuation protein MtrB (mtrB) (Bacillus subtilis (strain 168)).